A 223-amino-acid polypeptide reads, in one-letter code: Type II restriction enzyme BglII (223 aa).

Mg(2+) is bound by residues D84 and V94.

Homodimer. Requires Mg(2+) as cofactor.

It catalyses the reaction Endonucleolytic cleavage of DNA to give specific double-stranded fragments with terminal 5'-phosphates.. Its function is as follows. A P subtype restriction enzyme that recognizes the double-stranded sequence 5'-AGATCT-3' and cleaves after A-1. The chain is Type II restriction enzyme BglII (bglIIR) from Bacillus subtilis.